A 254-amino-acid polypeptide reads, in one-letter code: Probable transcriptional regulatory protein Cyan7425_4347 (254 aa).

The protein belongs to the TACO1 family.

Its subcellular location is the cytoplasm. This chain is Probable transcriptional regulatory protein Cyan7425_4347, found in Cyanothece sp. (strain PCC 7425 / ATCC 29141).